The primary structure comprises 853 residues: DNA mismatch repair protein MutS (853 aa).

Residue 614-621 (GPNMGGKS) participates in ATP binding.

It belongs to the DNA mismatch repair MutS family.

This protein is involved in the repair of mismatches in DNA. It is possible that it carries out the mismatch recognition step. This protein has a weak ATPase activity. The sequence is that of DNA mismatch repair protein MutS from Klebsiella pneumoniae subsp. pneumoniae (strain ATCC 700721 / MGH 78578).